The sequence spans 423 residues: Serine hydroxymethyltransferase (423 aa).

Residues L118 and 122–124 (GHL) each bind (6S)-5,6,7,8-tetrahydrofolate. N6-(pyridoxal phosphate)lysine is present on K227. 351-353 (SPF) is a binding site for (6S)-5,6,7,8-tetrahydrofolate.

Belongs to the SHMT family. As to quaternary structure, homodimer. Requires pyridoxal 5'-phosphate as cofactor.

The protein resides in the cytoplasm. It catalyses the reaction (6R)-5,10-methylene-5,6,7,8-tetrahydrofolate + glycine + H2O = (6S)-5,6,7,8-tetrahydrofolate + L-serine. The protein operates within one-carbon metabolism; tetrahydrofolate interconversion. It participates in amino-acid biosynthesis; glycine biosynthesis; glycine from L-serine: step 1/1. Catalyzes the reversible interconversion of serine and glycine with tetrahydrofolate (THF) serving as the one-carbon carrier. This reaction serves as the major source of one-carbon groups required for the biosynthesis of purines, thymidylate, methionine, and other important biomolecules. Also exhibits THF-independent aldolase activity toward beta-hydroxyamino acids, producing glycine and aldehydes, via a retro-aldol mechanism. The chain is Serine hydroxymethyltransferase from Petrotoga mobilis (strain DSM 10674 / SJ95).